The following is a 491-amino-acid chain: Glycogen synthase 1 (491 aa).

Lys15 contacts ADP-alpha-D-glucose.

The protein belongs to the glycosyltransferase 1 family. Bacterial/plant glycogen synthase subfamily.

The catalysed reaction is [(1-&gt;4)-alpha-D-glucosyl](n) + ADP-alpha-D-glucose = [(1-&gt;4)-alpha-D-glucosyl](n+1) + ADP + H(+). Its pathway is glycan biosynthesis; glycogen biosynthesis. Synthesizes alpha-1,4-glucan chains using ADP-glucose. The chain is Glycogen synthase 1 from Synechococcus sp. (strain JA-3-3Ab) (Cyanobacteria bacterium Yellowstone A-Prime).